The chain runs to 449 residues: UDP-N-acetylmuramoylalanine--D-glutamate ligase (449 aa).

An ATP-binding site is contributed by 116-122 (GSNGKST).

This sequence belongs to the MurCDEF family.

It localises to the cytoplasm. It catalyses the reaction UDP-N-acetyl-alpha-D-muramoyl-L-alanine + D-glutamate + ATP = UDP-N-acetyl-alpha-D-muramoyl-L-alanyl-D-glutamate + ADP + phosphate + H(+). It functions in the pathway cell wall biogenesis; peptidoglycan biosynthesis. In terms of biological role, cell wall formation. Catalyzes the addition of glutamate to the nucleotide precursor UDP-N-acetylmuramoyl-L-alanine (UMA). The chain is UDP-N-acetylmuramoylalanine--D-glutamate ligase from Shewanella violacea (strain JCM 10179 / CIP 106290 / LMG 19151 / DSS12).